We begin with the raw amino-acid sequence, 105 residues long: Large ribosomal subunit protein eL30 (105 aa).

It belongs to the eukaryotic ribosomal protein eL30 family.

This chain is Large ribosomal subunit protein eL30 (RPL30), found in Candida glabrata (strain ATCC 2001 / BCRC 20586 / JCM 3761 / NBRC 0622 / NRRL Y-65 / CBS 138) (Yeast).